The sequence spans 420 residues: MAAKRTHERDPIYKIKGLAKDMLDGVFDDLMDKNVLNGDELLKIGEGASLILSKAENLVESFFEKTEMAGKIFAGHIANSDKQLSLQFPSDDEEDELQKMFTPSSASESRGKVEDEEMEVNVGVAHASHLMLTVPQGIQSTEVQDSLKLCSRDWFCTMKTERAEEIYPVMEKEGRTRLALIICNKKFDYLFDRDDAETDILNMKELLQNLGYSVVIKENLTAQEMETELMKFAGRPEHQSSDSTFLVFMSHGILEGICGVKHRNKKPDVLHDDTIFTIFNNSNCPSLRNKPKILIMQACRGRHTGTIWVSTSKGIATADTDEECVLSHRWNNSITKAHVETDFIAFKSSTPHNISWKVGKSGSLFISKLIDCFKKYCWCYHLEEIFRKVQYSFEVPGELTQMPTIERVSMTRYFYLFPGN.

The CARD domain maps to methionine 1–aspartate 92. Residues serine 85 and serine 90 each carry the phosphoserine modification. A disordered region spans residues glutamate 93–aspartate 115. Active-site residues include histidine 251 and cysteine 299.

This sequence belongs to the peptidase C14A family. In terms of assembly, heterotetramer that consists of two anti-parallel arranged heterodimers, each one formed by two subunits (Potential). May interact with TRAF2.

In terms of biological role, involved in the activation cascade of caspases responsible for apoptosis execution. In Rattus norvegicus (Rat), this protein is Caspase-12 (Casp12).